The chain runs to 255 residues: Ribonuclease HII (255 aa).

The 190-residue stretch at 58–247 folds into the RNase H type-2 domain; that stretch reads RYIAGIDEAG…VKSMVLGARY (190 aa). A divalent metal cation is bound by residues aspartate 64, glutamate 65, and aspartate 156.

This sequence belongs to the RNase HII family. Requires Mn(2+) as cofactor. Mg(2+) is required as a cofactor.

The protein resides in the cytoplasm. It catalyses the reaction Endonucleolytic cleavage to 5'-phosphomonoester.. Its function is as follows. Endonuclease that specifically degrades the RNA of RNA-DNA hybrids. The protein is Ribonuclease HII of Syntrophomonas wolfei subsp. wolfei (strain DSM 2245B / Goettingen).